We begin with the raw amino-acid sequence, 160 residues long: Crossover junction endodeoxyribonuclease RuvC (160 aa).

Catalysis depends on residues Asp9, Glu68, and Asp141. Residues Asp9, Glu68, and Asp141 each contribute to the Mg(2+) site.

It belongs to the RuvC family. As to quaternary structure, homodimer which binds Holliday junction (HJ) DNA. The HJ becomes 2-fold symmetrical on binding to RuvC with unstacked arms; it has a different conformation from HJ DNA in complex with RuvA. In the full resolvosome a probable DNA-RuvA(4)-RuvB(12)-RuvC(2) complex forms which resolves the HJ. Mg(2+) is required as a cofactor.

It localises to the cytoplasm. It carries out the reaction Endonucleolytic cleavage at a junction such as a reciprocal single-stranded crossover between two homologous DNA duplexes (Holliday junction).. The RuvA-RuvB-RuvC complex processes Holliday junction (HJ) DNA during genetic recombination and DNA repair. Endonuclease that resolves HJ intermediates. Cleaves cruciform DNA by making single-stranded nicks across the HJ at symmetrical positions within the homologous arms, yielding a 5'-phosphate and a 3'-hydroxyl group; requires a central core of homology in the junction. The consensus cleavage sequence is 5'-(A/T)TT(C/G)-3'. Cleavage occurs on the 3'-side of the TT dinucleotide at the point of strand exchange. HJ branch migration catalyzed by RuvA-RuvB allows RuvC to scan DNA until it finds its consensus sequence, where it cleaves and resolves the cruciform DNA. The protein is Crossover junction endodeoxyribonuclease RuvC of Campylobacter jejuni (strain RM1221).